Consider the following 92-residue polypeptide: Small ribosomal subunit protein uS19 (92 aa).

The protein belongs to the universal ribosomal protein uS19 family.

In terms of biological role, protein S19 forms a complex with S13 that binds strongly to the 16S ribosomal RNA. This Albidiferax ferrireducens (strain ATCC BAA-621 / DSM 15236 / T118) (Rhodoferax ferrireducens) protein is Small ribosomal subunit protein uS19.